The sequence spans 547 residues: Intercellular adhesion molecule 3 (547 aa).

The N-terminal stretch at 1 to 29 (MATMVPSVLWPRACWTLLVCCLLTPGVQG) is a signal peptide. At 30–485 (QEFLLRVEPQ…VMDIEAGSSH (456 aa)) the chain is on the extracellular side. Residues 46-103 (GGSLFVNCSTDCPSSEKIALETSLSKELVASGMGWAAFNLSNVTGNSRILCSVYCNGS) enclose the Ig-like C2-type 1 domain. Residues N52, N84, N87, N101, N110, and N134 are each glycosylated (N-linked (GlcNAc...) asparagine). 2 disulfides stabilise this stretch: C53–C96 and C57–C100. The 66-residue stretch at 132-197 (GQNFTLRCQV…FSCRTELDMQ (66 aa)) folds into the Ig-like C2-type 2 domain. The cysteines at positions 139 and 190 are disulfide-linked. 9 N-linked (GlcNAc...) asparagine glycosylation sites follow: N206, N264, N295, N308, N320, N363, N389, N453, and N457. The Ig-like C2-type 3 domain occupies 234 to 301 (ETSWPVDCTL…IVCNVTLGGE (68 aa)). A disulfide bridge connects residues C241 and C294. The Ig-like C2-type 4 domain maps to 329–382 (GSTVTVSCMAGARVQVTLDGVPAAAPGQPAQLQLNATESDDRRSFFCSATLEVD). A disulfide bond links C336 and C375. An Ig-like C2-type 5 domain is found at 416-469 (KTTHVLQCQARGNPYPELRCLKEGSSREVPVGIPFFVNVTHNGTYQCQASSSRG). C423 and C462 are joined by a disulfide. A helical membrane pass occupies residues 486–510 (FVPVFVAVLLTLGVVTIVLALMYVF). At 511–547 (REHKRSGSYHVREESTYLPLTSMQPTQAMGEEPSRAE) the chain is on the cytoplasmic side.

It belongs to the immunoglobulin superfamily. ICAM family. In terms of assembly, interacts with moesin/MSN. Post-translationally, upon stimulation by a physiologic stimuli becomes rapidly and transiently phosphorylated on serine residues. Leukocytes.

It localises to the membrane. ICAM proteins are ligands for the leukocyte adhesion protein LFA-1 (integrin alpha-L/beta-2). ICAM3 is also a ligand for integrin alpha-D/beta-2. In association with integrin alpha-L/beta-2, contributes to apoptotic neutrophil phagocytosis by macrophages. The protein is Intercellular adhesion molecule 3 (ICAM3) of Pan troglodytes (Chimpanzee).